Reading from the N-terminus, the 166-residue chain is Putative peroxisomal peroxiredoxin (166 aa).

One can recognise a Thioredoxin domain in the interval 5–166 (FPEDVKFLYI…SGVDAVLAAL (162 aa)). Cys-56 (cysteine sulfenic acid (-SOH) intermediate) is an active-site residue.

Belongs to the peroxiredoxin family. Prx5 subfamily. As to quaternary structure, homodimer; disulfide-linked, upon oxidation.

It catalyses the reaction a hydroperoxide + [protein]-dithiol = [protein]-disulfide + an alcohol + H2O. Functionally, thiol-specific peroxidase that catalyzes the reduction of hydrogen peroxide and organic hydroperoxides to water and alcohols, respectively. Plays a role in cell protection against oxidative stress by detoxifying peroxides and as sensor of hydrogen peroxide-mediated signaling events. This chain is Putative peroxisomal peroxiredoxin, found in Lipomyces kononenkoae (Yeast).